Here is a 619-residue protein sequence, read N- to C-terminus: Probable Xaa-Pro aminopeptidase P (619 aa).

Mn(2+) contacts are provided by Asp-415, Asp-426, Glu-524, and Glu-538.

It belongs to the peptidase M24B family. Mn(2+) serves as cofactor.

The catalysed reaction is Release of any N-terminal amino acid, including proline, that is linked to proline, even from a dipeptide or tripeptide.. In terms of biological role, catalyzes the removal of a penultimate prolyl residue from the N-termini of peptides. This is Probable Xaa-Pro aminopeptidase P (AMPP) from Fusarium vanettenii (strain ATCC MYA-4622 / CBS 123669 / FGSC 9596 / NRRL 45880 / 77-13-4) (Fusarium solani subsp. pisi).